Here is a 122-residue protein sequence, read N- to C-terminus: Small ribosomal subunit protein uS13 (122 aa).

A disordered region spans residues 93-122; the sequence is RRGLPVRGQRTKTNARTRKGPKKTIAGKKK.

It belongs to the universal ribosomal protein uS13 family. Part of the 30S ribosomal subunit. Forms a loose heterodimer with protein S19. Forms two bridges to the 50S subunit in the 70S ribosome.

Functionally, located at the top of the head of the 30S subunit, it contacts several helices of the 16S rRNA. In the 70S ribosome it contacts the 23S rRNA (bridge B1a) and protein L5 of the 50S subunit (bridge B1b), connecting the 2 subunits; these bridges are implicated in subunit movement. Contacts the tRNAs in the A and P-sites. In Corynebacterium urealyticum (strain ATCC 43042 / DSM 7109), this protein is Small ribosomal subunit protein uS13.